The chain runs to 331 residues: RNA/RNP complex-1-interacting phosphatase (331 aa).

Residues 61–208 (FEKHLAPEEC…LRNGPIRKNW (148 aa)) form the Tyrosine-protein phosphatase domain. Cys152 (phosphocysteine intermediate) is an active-site residue. 153–158 (THGVNR) is a substrate binding site. The Proton donor/acceptor role is filled by Arg158.

It belongs to the protein-tyrosine phosphatase family. Non-receptor class dual specificity subfamily. In terms of assembly, monomer. May interact with SFRS7 and SFRS9/SRP30C.

It is found in the nucleus. Its subcellular location is the nucleus speckle. Possesses RNA 5'-triphosphatase and diphosphatase activities, but displays a poor protein-tyrosine phosphatase activity. In addition, has phosphatase activity with ATP, ADP and O-methylfluorescein phosphate (in vitro). Binds to RNA. May participate in nuclear mRNA metabolism. This chain is RNA/RNP complex-1-interacting phosphatase (DUSP11), found in Bos taurus (Bovine).